Reading from the N-terminus, the 400-residue chain is CCA-adding enzyme (400 aa).

2 residues coordinate ATP: G27 and R30. Positions 27 and 30 each coordinate CTP. Residues D40 and D42 each coordinate Mg(2+). ATP is bound by residues R111, D154, R157, R160, and R163. Residues R111, D154, R157, R160, and R163 each contribute to the CTP site.

It belongs to the tRNA nucleotidyltransferase/poly(A) polymerase family. Bacterial CCA-adding enzyme type 3 subfamily. Homodimer. Mg(2+) is required as a cofactor.

The catalysed reaction is a tRNA precursor + 2 CTP + ATP = a tRNA with a 3' CCA end + 3 diphosphate. It catalyses the reaction a tRNA with a 3' CCA end + 2 CTP + ATP = a tRNA with a 3' CCACCA end + 3 diphosphate. Functionally, catalyzes the addition and repair of the essential 3'-terminal CCA sequence in tRNAs without using a nucleic acid template. Adds these three nucleotides in the order of C, C, and A to the tRNA nucleotide-73, using CTP and ATP as substrates and producing inorganic pyrophosphate. tRNA 3'-terminal CCA addition is required both for tRNA processing and repair. Also involved in tRNA surveillance by mediating tandem CCA addition to generate a CCACCA at the 3' terminus of unstable tRNAs. While stable tRNAs receive only 3'-terminal CCA, unstable tRNAs are marked with CCACCA and rapidly degraded. This is CCA-adding enzyme from Bacillus pumilus (strain SAFR-032).